The sequence spans 205 residues: MSKRHSQKYKIDRRMGENLWGRPKSPVNSRSYGPGQHGQRRKTKMSDFGLQLMAKQKLKGYYGNITEKQFRRTYDEASRRKGNTAELLIGLLESRLDAIVYRCKFVPTVFASRQFVNHGHVKVNGIKVNIPSYRCKPGDVIEVRERSRSMALVLEALDSPERDLPEYIDLDAKAMKATFVRMPEFSEVPYAVQMEPNLVIEFYSS.

Positions 1–44 are disordered; that stretch reads MSKRHSQKYKIDRRMGENLWGRPKSPVNSRSYGPGQHGQRRKTK. Positions 94–173 constitute an S4 RNA-binding domain; the sequence is SRLDAIVYRC…LPEYIDLDAK (80 aa).

This sequence belongs to the universal ribosomal protein uS4 family. Part of the 30S ribosomal subunit. Contacts protein S5. The interaction surface between S4 and S5 is involved in control of translational fidelity.

In terms of biological role, one of the primary rRNA binding proteins, it binds directly to 16S rRNA where it nucleates assembly of the body of the 30S subunit. Its function is as follows. With S5 and S12 plays an important role in translational accuracy. The sequence is that of Small ribosomal subunit protein uS4 from Maricaulis maris (strain MCS10) (Caulobacter maris).